Reading from the N-terminus, the 224-residue chain is tRNA (guanine-N(7)-)-methyltransferase (224 aa).

S-adenosyl-L-methionine contacts are provided by Glu54, Glu79, Asp106, and Asp129. Residue Asp129 is part of the active site. Substrate contacts are provided by Lys133 and Asp165.

Belongs to the class I-like SAM-binding methyltransferase superfamily. TrmB family.

The enzyme catalyses guanosine(46) in tRNA + S-adenosyl-L-methionine = N(7)-methylguanosine(46) in tRNA + S-adenosyl-L-homocysteine. The protein operates within tRNA modification; N(7)-methylguanine-tRNA biosynthesis. In terms of biological role, catalyzes the formation of N(7)-methylguanine at position 46 (m7G46) in tRNA. The chain is tRNA (guanine-N(7)-)-methyltransferase from Chlamydia felis (strain Fe/C-56) (Chlamydophila felis).